A 339-amino-acid chain; its full sequence is Putative NADP-dependent oxidoreductase YfmJ (339 aa).

NADP(+) contacts are provided by residues 156–159, lysine 182, tyrosine 198, asparagine 222, 244–250, 277–279, and asparagine 327; these read GAVG, CGAISSY, and FIV.

This sequence belongs to the NADP-dependent oxidoreductase L4BD family.

Putative quinone oxidoreductase that may contribute to the degradation of aromatic compounds. The protein is Putative NADP-dependent oxidoreductase YfmJ (yfmJ) of Bacillus subtilis (strain 168).